The chain runs to 22 residues: Caerin-3.4 (22 aa).

Lys22 bears the Lysine amide mark.

As to expression, expressed by the skin parotoid and/or rostral glands.

The protein localises to the secreted. In terms of biological role, antibacterial peptide, that adopts an alpha helical conformation which can disrupt bacterial membranes. Each caerin displays a different antimicrobial specificity. The polypeptide is Caerin-3.4 (Ranoidea caerulea (Green tree frog)).